Reading from the N-terminus, the 381-residue chain is Selenoprotein P (381 aa).

Positions 1 to 19 (MWRSLGLALALCLLPLGGT) are cleaved as a signal peptide. Asn46 is a glycosylation site (N-linked (GlcNAc...) asparagine). Position 59 (Sec59) is a non-standard amino acid, selenocysteine. N-linked (GlcNAc...) asparagine glycans are attached at residues Asn83, Asn119, and Asn128. The interval 202–268 (SPHYHHEHHH…ENRDMPGSED (67 aa)) is disordered. Residues 204-217 (HYHHEHHHNHRHQH) are compositionally biased toward basic residues. Positions 218 to 229 (LGSSELSENQQP) are enriched in polar residues. The span at 243-255 (LHHHHKHKGQHRQ) shows a compositional bias: basic residues. Phosphoserine is present on Ser266. 2 non-standard amino acids (selenocysteine) are found at residues Sec318 and Sec330. N-linked (GlcNAc...) asparagine glycosylation occurs at Asn338. 6 non-standard amino acids (selenocysteine) are found at residues Sec345, Sec352, Sec367, Sec369, Sec376, and Sec378. The tract at residues 352–381 (UQISQQLIPTEASTSURUKNQAKKUEUPSN) is disordered. Positions 353–369 (QISQQLIPTEASTSURU) are enriched in polar residues.

Belongs to the selenoprotein P family. In terms of processing, phosphorylation sites are present in the extracellular medium.

It localises to the secreted. Its function is as follows. Might be responsible for some of the extracellular antioxidant defense properties of selenium or might be involved in the transport of selenium. May supply selenium to tissues such as brain and testis. The chain is Selenoprotein P from Pongo abelii (Sumatran orangutan).